A 197-amino-acid chain; its full sequence is Phosphoheptose isomerase (197 aa).

The region spanning 34–192 (MVNALINGNK…CEGVDDCLFP (159 aa)) is the SIS domain. Residues 49 to 51 (NGG), Gln-62, 91 to 92 (ND), Ser-122, and His-172 contribute to the substrate site. Zn(2+) is bound at residue Gln-62. Zn(2+) contacts are provided by His-172 and His-180.

The protein belongs to the SIS family. GmhA subfamily. As to quaternary structure, homotetramer. Zn(2+) is required as a cofactor.

It localises to the cytoplasm. It catalyses the reaction 2 D-sedoheptulose 7-phosphate = D-glycero-alpha-D-manno-heptose 7-phosphate + D-glycero-beta-D-manno-heptose 7-phosphate. The protein operates within carbohydrate biosynthesis; D-glycero-D-manno-heptose 7-phosphate biosynthesis; D-glycero-alpha-D-manno-heptose 7-phosphate and D-glycero-beta-D-manno-heptose 7-phosphate from sedoheptulose 7-phosphate: step 1/1. In terms of biological role, catalyzes the isomerization of sedoheptulose 7-phosphate in D-glycero-D-manno-heptose 7-phosphate. The protein is Phosphoheptose isomerase of Pseudoalteromonas atlantica (strain T6c / ATCC BAA-1087).